The chain runs to 61 residues: Large ribosomal subunit protein uL30 (61 aa).

Belongs to the universal ribosomal protein uL30 family. In terms of assembly, part of the 50S ribosomal subunit.

This is Large ribosomal subunit protein uL30 from Mycolicibacterium gilvum (strain PYR-GCK) (Mycobacterium gilvum (strain PYR-GCK)).